Here is a 114-residue protein sequence, read N- to C-terminus: Ribonuclease P protein component (114 aa).

It belongs to the RnpA family. Consists of a catalytic RNA component (M1 or rnpB) and a protein subunit.

The enzyme catalyses Endonucleolytic cleavage of RNA, removing 5'-extranucleotides from tRNA precursor.. RNaseP catalyzes the removal of the 5'-leader sequence from pre-tRNA to produce the mature 5'-terminus. It can also cleave other RNA substrates such as 4.5S RNA. The protein component plays an auxiliary but essential role in vivo by binding to the 5'-leader sequence and broadening the substrate specificity of the ribozyme. The protein is Ribonuclease P protein component of Staphylococcus haemolyticus (strain JCSC1435).